Reading from the N-terminus, the 442-residue chain is tRNA modification GTPase MnmE (442 aa).

(6S)-5-formyl-5,6,7,8-tetrahydrofolate contacts are provided by Arg27, Glu84, and Lys124. The TrmE-type G domain maps to 221–366; sequence GLHVVIVGAP…LLTNLQNFAE (146 aa). Residues 231 to 236, 250 to 256, and 275 to 278 contribute to the GTP site; these read NAGKSS, SEEAGTT, and DTAG. Positions 235 and 256 each coordinate Mg(2+). Lys442 lines the (6S)-5-formyl-5,6,7,8-tetrahydrofolate pocket.

It belongs to the TRAFAC class TrmE-Era-EngA-EngB-Septin-like GTPase superfamily. TrmE GTPase family. Homodimer. Heterotetramer of two MnmE and two MnmG subunits. The cofactor is K(+).

It localises to the cytoplasm. In terms of biological role, exhibits a very high intrinsic GTPase hydrolysis rate. Involved in the addition of a carboxymethylaminomethyl (cmnm) group at the wobble position (U34) of certain tRNAs, forming tRNA-cmnm(5)s(2)U34. The polypeptide is tRNA modification GTPase MnmE (Brucella anthropi (strain ATCC 49188 / DSM 6882 / CCUG 24695 / JCM 21032 / LMG 3331 / NBRC 15819 / NCTC 12168 / Alc 37) (Ochrobactrum anthropi)).